A 331-amino-acid polypeptide reads, in one-letter code: Malate dehydrogenase (331 aa).

14–20 lines the NAD(+) pocket; the sequence is GAAGSIG. The substrate site is built by Arg95 and Arg101. NAD(+)-binding positions include Asn108, Gln115, and 132–134; that span reads VGN. Asn134 and Arg165 together coordinate substrate. Catalysis depends on His190, which acts as the Proton acceptor.

This sequence belongs to the LDH/MDH superfamily. MDH type 2 family.

The enzyme catalyses (S)-malate + NAD(+) = oxaloacetate + NADH + H(+). Its function is as follows. Catalyzes the reversible oxidation of malate to oxaloacetate. The protein is Malate dehydrogenase of Rhodococcus jostii (strain RHA1).